The sequence spans 663 residues: DNA ligase 1 (663 aa).

NAD(+) contacts are provided by residues 30-34 (DAEYD) and 78-79 (SL). Lys105 (N6-AMP-lysine intermediate) is an active-site residue. NAD(+) is bound by residues Arg126, Glu161, and Lys294. Cys389, Cys392, Cys407, and Cys412 together coordinate Zn(2+). In terms of domain architecture, BRCT spans 574 to 663 (AAGAPLAGKT…WAQLIEAKLV (90 aa)).

This sequence belongs to the NAD-dependent DNA ligase family. LigA subfamily. Mg(2+) serves as cofactor. The cofactor is Mn(2+).

The enzyme catalyses NAD(+) + (deoxyribonucleotide)n-3'-hydroxyl + 5'-phospho-(deoxyribonucleotide)m = (deoxyribonucleotide)n+m + AMP + beta-nicotinamide D-nucleotide.. In terms of biological role, DNA ligase that catalyzes the formation of phosphodiester linkages between 5'-phosphoryl and 3'-hydroxyl groups in double-stranded DNA using NAD as a coenzyme and as the energy source for the reaction. It is essential for DNA replication and repair of damaged DNA. The chain is DNA ligase 1 from Nocardia farcinica (strain IFM 10152).